The primary structure comprises 800 residues: Transducin beta-like protein 3 (800 aa).

At Ala-2 the chain carries N-acetylalanine. WD repeat units lie at residues 64 to 105, 107 to 146, 149 to 190, 193 to 232, 245 to 284, 290 to 329, 332 to 372, 374 to 413, 419 to 459, 477 to 516, 519 to 560, 562 to 602, and 604 to 642; these read EDQE…RLWK, IHTAPVATMAFDPTSTLLATGGCDGAVRVWDVVRCYGTHH, GSPG…CLAV, AHYSAVTSLTFSADGHTMLSSGRDKICVIWDLRSLQATRT, LPEEPAPELGVKSAGLHFLTAGDQGALRVWEAASGRCVHA, GPGRELTHCTLAHAAGLLLSVTADHNLLLYDARSLRLRKQ, GYSE…CQIL, GHTDIVLALDVFRKGRLFASCAKDQSIRVWRMNKSGEVAC, GHTH…LSKG, CHDKDINSVAVAPNDKLLATGSQDRTAKLWALPRCQLLGT, GHRR…KTFE, HDAS…RTLD, and HEDKVWGLHCSRLDDRALTGASDSRVVLWKDVTEAEQAE. Ser-257 carries the phosphoserine modification. A Glycyl lysine isopeptide (Lys-Gly) (interchain with G-Cter in SUMO2) cross-link involves residue Lys-407.

In terms of assembly, part of the small subunit (SSU) processome, composed of more than 70 proteins and the RNA chaperone small nucleolar RNA (snoRNA) U3.

It is found in the nucleus. Its subcellular location is the nucleolus. Part of the small subunit (SSU) processome, first precursor of the small eukaryotic ribosomal subunit. During the assembly of the SSU processome in the nucleolus, many ribosome biogenesis factors, an RNA chaperone and ribosomal proteins associate with the nascent pre-rRNA and work in concert to generate RNA folding, modifications, rearrangements and cleavage as well as targeted degradation of pre-ribosomal RNA by the RNA exosome. The polypeptide is Transducin beta-like protein 3 (TBL3) (Bos taurus (Bovine)).